The following is a 228-amino-acid chain: Probable octanoyltransferase (228 aa).

In terms of domain architecture, BPL/LPL catalytic spans S27 to V198. Residues R65–H72, S129–G131, and G142–A144 each bind substrate. Catalysis depends on C160, which acts as the Acyl-thioester intermediate.

The protein belongs to the LipB family.

The protein resides in the cytoplasm. The catalysed reaction is octanoyl-[ACP] + L-lysyl-[protein] = N(6)-octanoyl-L-lysyl-[protein] + holo-[ACP] + H(+). It participates in protein modification; protein lipoylation via endogenous pathway; protein N(6)-(lipoyl)lysine from octanoyl-[acyl-carrier-protein]: step 1/2. In terms of biological role, catalyzes the transfer of endogenously produced octanoic acid from octanoyl-acyl-carrier-protein onto the lipoyl domains of lipoate-dependent enzymes. Lipoyl-ACP can also act as a substrate although octanoyl-ACP is likely to be the physiological substrate. This chain is Probable octanoyltransferase, found in Pyrobaculum calidifontis (strain DSM 21063 / JCM 11548 / VA1).